The following is a 208-amino-acid chain: Uracil phosphoribosyltransferase (208 aa).

5-phospho-alpha-D-ribose 1-diphosphate is bound by residues R78, R103, and D130 to T138. Uracil contacts are provided by residues I193 and G198–A200. D199 contributes to the 5-phospho-alpha-D-ribose 1-diphosphate binding site.

This sequence belongs to the UPRTase family. Requires Mg(2+) as cofactor.

It carries out the reaction UMP + diphosphate = 5-phospho-alpha-D-ribose 1-diphosphate + uracil. It participates in pyrimidine metabolism; UMP biosynthesis via salvage pathway; UMP from uracil: step 1/1. With respect to regulation, allosterically activated by GTP. Catalyzes the conversion of uracil and 5-phospho-alpha-D-ribose 1-diphosphate (PRPP) to UMP and diphosphate. In Campylobacter curvus (strain 525.92), this protein is Uracil phosphoribosyltransferase.